Reading from the N-terminus, the 254-residue chain is Triosephosphate isomerase (254 aa).

9–11 contributes to the substrate binding site; that stretch reads NWK. His-95 (electrophile) is an active-site residue. Glu-167 serves as the catalytic Proton acceptor. Substrate is bound by residues Gly-173, Ser-213, and 234–235; that span reads GG.

It belongs to the triosephosphate isomerase family. In terms of assembly, homodimer.

It localises to the cytoplasm. It carries out the reaction D-glyceraldehyde 3-phosphate = dihydroxyacetone phosphate. Its pathway is carbohydrate biosynthesis; gluconeogenesis. The protein operates within carbohydrate degradation; glycolysis; D-glyceraldehyde 3-phosphate from glycerone phosphate: step 1/1. Its function is as follows. Involved in the gluconeogenesis. Catalyzes stereospecifically the conversion of dihydroxyacetone phosphate (DHAP) to D-glyceraldehyde-3-phosphate (G3P). This Roseiflexus castenholzii (strain DSM 13941 / HLO8) protein is Triosephosphate isomerase.